A 507-amino-acid chain; its full sequence is Probable cytosol aminopeptidase (507 aa).

K271 and D276 together coordinate Mn(2+). The active site involves K283. Positions 294, 353, and 355 each coordinate Mn(2+). The active site involves R357.

The protein belongs to the peptidase M17 family. It depends on Mn(2+) as a cofactor.

The protein resides in the cytoplasm. It catalyses the reaction Release of an N-terminal amino acid, Xaa-|-Yaa-, in which Xaa is preferably Leu, but may be other amino acids including Pro although not Arg or Lys, and Yaa may be Pro. Amino acid amides and methyl esters are also readily hydrolyzed, but rates on arylamides are exceedingly low.. The enzyme catalyses Release of an N-terminal amino acid, preferentially leucine, but not glutamic or aspartic acids.. Its function is as follows. Presumably involved in the processing and regular turnover of intracellular proteins. Catalyzes the removal of unsubstituted N-terminal amino acids from various peptides. This is Probable cytosol aminopeptidase from Nitratidesulfovibrio vulgaris (strain ATCC 29579 / DSM 644 / CCUG 34227 / NCIMB 8303 / VKM B-1760 / Hildenborough) (Desulfovibrio vulgaris).